The primary structure comprises 1253 residues: Elongator complex protein 1 (1253 aa).

The tract at residues valine 830 to isoleucine 1253 is mediates dimerization. Polar residues predominate over residues tyrosine 1126–lysine 1141. A disordered region spans residues tyrosine 1126–glycine 1153. The tract at residues arginine 1137 to lysine 1155 is required for binding to tRNA. The span at asparagine 1142–glycine 1153 shows a compositional bias: basic residues.

The protein belongs to the ELP1/IKA1 family. Homodimer. Component of the elongator complex.

The protein localises to the cytoplasm. It functions in the pathway tRNA modification; 5-methoxycarbonylmethyl-2-thiouridine-tRNA biosynthesis. In terms of biological role, component of the elongator complex, a multiprotein complex which is required for multiple tRNA modifications, including mcm5U (5-methoxycarbonylmethyl uridine), mcm5s2U (5-methoxycarbonylmethyl-2-thiouridine), and ncm5U (5-carbamoylmethyl uridine). The elongator complex catalyzes formation of carboxymethyluridine in the wobble base at position 34 in tRNAs. ELP1 binds to tRNA, mediating interaction of the elongator complex with tRNA. This Schizosaccharomyces pombe (strain 972 / ATCC 24843) (Fission yeast) protein is Elongator complex protein 1.